A 102-amino-acid polypeptide reads, in one-letter code: uncharacterized protein (102 aa).

The helical transmembrane segment at 7–23 (IVFVSCVILGLAACSSQ) threads the bilayer.

The protein resides in the membrane. This is an uncharacterized protein from Haemophilus influenzae (strain ATCC 51907 / DSM 11121 / KW20 / Rd).